Reading from the N-terminus, the 549-residue chain is Undecaprenyl phosphate-alpha-4-amino-4-deoxy-L-arabinose arabinosyl transferase (549 aa).

The next 12 membrane-spanning stretches (helical) occupy residues 9 to 29, 80 to 100, 112 to 132, 136 to 156, 176 to 196, 204 to 224, 256 to 276, 288 to 308, 312 to 332, 346 to 366, 376 to 396, and 402 to 422; these read LLLI…GLWI, LFGV…LAYL, SLAC…SGYA, PQFT…LDAG, FLTK…PYML, LLGY…PWAL, PWWF…GLLP, QPPV…FSLS, LPTY…HALV, NGLL…YLQL, FELF…LAQW, and AWAA…AAMP.

This sequence belongs to the glycosyltransferase 83 family.

It localises to the cell inner membrane. It catalyses the reaction 4-amino-4-deoxy-alpha-L-arabinopyranosyl di-trans,octa-cis-undecaprenyl phosphate + lipid IVA = lipid IIA + di-trans,octa-cis-undecaprenyl phosphate.. It functions in the pathway lipopolysaccharide metabolism; 4-amino-4-deoxy-beta-L-arabinose-lipid A biosynthesis. Its function is as follows. Catalyzes the transfer of the L-Ara4N moiety of the glycolipid undecaprenyl phosphate-alpha-L-Ara4N to lipid A. The modified arabinose is attached to lipid A and is required for resistance to polymyxin and cationic antimicrobial peptides. This is Undecaprenyl phosphate-alpha-4-amino-4-deoxy-L-arabinose arabinosyl transferase from Pseudomonas paraeruginosa (strain DSM 24068 / PA7) (Pseudomonas aeruginosa (strain PA7)).